The chain runs to 153 residues: 6,7-dimethyl-8-ribityllumazine synthase (153 aa).

Residues phenylalanine 22, 56–58 (AFE), and 80–82 (AVI) contribute to the 5-amino-6-(D-ribitylamino)uracil site. 85–86 (GT) lines the (2S)-2-hydroxy-3-oxobutyl phosphate pocket. Residue histidine 88 is the Proton donor of the active site. Residue phenylalanine 113 coordinates 5-amino-6-(D-ribitylamino)uracil. Residue arginine 127 participates in (2S)-2-hydroxy-3-oxobutyl phosphate binding.

It belongs to the DMRL synthase family. As to quaternary structure, forms an icosahedral capsid composed of 60 subunits, arranged as a dodecamer of pentamers.

The catalysed reaction is (2S)-2-hydroxy-3-oxobutyl phosphate + 5-amino-6-(D-ribitylamino)uracil = 6,7-dimethyl-8-(1-D-ribityl)lumazine + phosphate + 2 H2O + H(+). It functions in the pathway cofactor biosynthesis; riboflavin biosynthesis; riboflavin from 2-hydroxy-3-oxobutyl phosphate and 5-amino-6-(D-ribitylamino)uracil: step 1/2. Catalyzes the formation of 6,7-dimethyl-8-ribityllumazine by condensation of 5-amino-6-(D-ribitylamino)uracil with 3,4-dihydroxy-2-butanone 4-phosphate. This is the penultimate step in the biosynthesis of riboflavin. The protein is 6,7-dimethyl-8-ribityllumazine synthase of Hydrogenovibrio crunogenus (strain DSM 25203 / XCL-2) (Thiomicrospira crunogena).